The chain runs to 309 residues: MRTVTVGTRGSTLALAQTRWVVARLKEEWPETDFRIQTISTKGDRNRESLEQLAQKGDKGFWVKEIEEALLAKKIDIAVHSLKDLPTEQPEGLEISSIPKRVDGRDALIGREGMKKLAELPEGARIGTSSVRRKAFLRAYRPDLIVKDLRGNIDTRLAALGSGEYDAIILAAAGLIRTEQRHRIDEFVDPDILLPAPGQGALALETRTEDDLTIEVAYAIHDHATDDRITAEREFLAGLGAGCMAPVGAHAVIKNGLLTLEGWVGALDGTQVIRATSQGDVAECADIGAELAADMLERGAAELIEAVRE.

Residue cysteine 243 is modified to S-(dipyrrolylmethanemethyl)cysteine.

It belongs to the HMBS family. In terms of assembly, monomer. Dipyrromethane is required as a cofactor.

The catalysed reaction is 4 porphobilinogen + H2O = hydroxymethylbilane + 4 NH4(+). The protein operates within porphyrin-containing compound metabolism; protoporphyrin-IX biosynthesis; coproporphyrinogen-III from 5-aminolevulinate: step 2/4. Its function is as follows. Tetrapolymerization of the monopyrrole PBG into the hydroxymethylbilane pre-uroporphyrinogen in several discrete steps. This is Porphobilinogen deaminase (hemC) from Deinococcus radiodurans (strain ATCC 13939 / DSM 20539 / JCM 16871 / CCUG 27074 / LMG 4051 / NBRC 15346 / NCIMB 9279 / VKM B-1422 / R1).